The following is a 443-amino-acid chain: Elongation factor 1-alpha (443 aa).

The region spanning Lys-5–Tyr-228 is the tr-type G domain. Residues Gly-14–Ser-21 form a G1 region. Gly-14–Ser-21 contributes to the GTP binding site. Residues Gly-70 to Asp-74 form a G2 region. Residues Asp-91 to Gly-94 form a G3 region. Residues Asp-91–His-95 and Asn-153–Asp-156 contribute to the GTP site. The interval Asn-153 to Asp-156 is G4. The segment at Ser-192 to Phe-194 is G5.

It belongs to the TRAFAC class translation factor GTPase superfamily. Classic translation factor GTPase family. EF-Tu/EF-1A subfamily.

Its subcellular location is the cytoplasm. This protein promotes the GTP-dependent binding of aminoacyl-tRNA to the A-site of ribosomes during protein biosynthesis. This is Elongation factor 1-alpha (MEF-1) from Plasmodium falciparum (isolate K1 / Thailand).